A 381-amino-acid polypeptide reads, in one-letter code: Alkanesulfonate monooxygenase (381 aa).

The protein belongs to the SsuD family. In terms of assembly, homotetramer.

It carries out the reaction an alkanesulfonate + FMNH2 + O2 = an aldehyde + FMN + sulfite + H2O + 2 H(+). Catalyzes the desulfonation of aliphatic sulfonates. The protein is Alkanesulfonate monooxygenase of Escherichia coli O8 (strain IAI1).